Here is a 47-residue protein sequence, read N- to C-terminus: Large ribosomal subunit protein bL34 (47 aa).

The segment at 1 to 28 (MAKGKRTFQPNNRRRARVHGFRTRMRTR) is disordered.

The protein belongs to the bacterial ribosomal protein bL34 family.

This chain is Large ribosomal subunit protein bL34, found in Corynebacterium efficiens (strain DSM 44549 / YS-314 / AJ 12310 / JCM 11189 / NBRC 100395).